We begin with the raw amino-acid sequence, 559 residues long: MNEVENNNHSFPREDIPTEDEIEEEANSRQGILRYFRVARAEYTKFALLGLMFGIIGFIYSFMRILKDMFVMVRQEPTTILFIKIFYILPVSMALVFLIQYMLGTKTVSRIFSIFCGGFASLFFLCGAVFLIEEQVSPSKFLFRDMFIDGKMSSRSLNVFKSMFLTLNEPLATIVFISAEMWGSLVLSYLFLSFLNESCTIRQFSRFIPPLIIITNVSLFLSATVAGAFFKLREKLAFQQNQVLLSGIFIFQGFLVVLVIFLKIYLERVTMKRPLFIVSSGSRRKKAKANVSFSEGLEIMSQSKLLLAMSLIVLFFNISYNMVESTFKVGVKVAAEYFNEEKGKYSGKFNRIDQYMTSVVVICLNLSPFSSYVETRGFLLVGLITPIVTLMAIVLFLGSALYNTSMEESGLGIVNGLFPGGKPLYVLENYFGVIFMSLLKITKYSAFDICKEKLGMRINPTYRARFKSVYDGIFGKLGKSIGSIYGLLMFEALDTEDLRKATPITAGIIFIFIVMWVKAIIYLSRSYESAVQHNRDVDIDMTEKAKKSLETPEEPKVVD.

Residues 1 to 10 (MNEVENNNHS) are compositionally biased toward polar residues. The tract at residues 1–22 (MNEVENNNHSFPREDIPTEDEI) is disordered. N-linked (GlcNAc...) asparagine glycosylation is present at Asn-8. 4 consecutive transmembrane segments (helical) span residues 46–66 (FALLGLMFGIIGFIYSFMRIL), 79–99 (TILFIKIFYILPVSMALVFLI), 111–131 (IFSIFCGGFASLFFLCGAVFL), and 174–194 (IVFISAEMWGSLVLSYLFLSF). An N-linked (GlcNAc...) asparagine glycan is attached at Asn-196. Transmembrane regions (helical) follow at residues 210–230 (PLIIITNVSLFLSATVAGAFF) and 242–262 (QVLLSGIFIFQGFLVVLVIFL). Asn-290 carries an N-linked (GlcNAc...) asparagine glycan. The next 3 membrane-spanning stretches (helical) occupy residues 305–325 (LLLAMSLIVLFFNISYNMVES), 354–373 (QYMTSVVVICLNLSPFSSYV), and 377–397 (GFLLVGLITPIVTLMAIVLFL). A glycan (N-linked (GlcNAc...) asparagine) is linked at Asn-403. Helical transmembrane passes span 425 to 447 (YVLENYFGVIFMSLLKITKYSAF), 473 to 493 (IFGKLGKSIGSIYGLLMFEAL), and 503 to 523 (PITAGIIFIFIVMWVKAIIYL).

The protein belongs to the ADP/ATP translocase tlc family.

Its subcellular location is the cell membrane. Its function is as follows. ATP transporter involved in the uptake of ATP from the host cell cytoplasm. Provides the microsporidian cell with host ATP in exchange for ADP. This is an obligate exchange system. This energy acquiring activity is an important component of microsporidian parasitism. This is ADP,ATP carrier protein 1 (NTT1) from Encephalitozoon cuniculi (strain GB-M1) (Microsporidian parasite).